The chain runs to 115 residues: uncharacterized protein (115 aa).

3 consecutive transmembrane segments (helical) span residues 1–21 (MFLA…FGSW), 33–53 (ALAL…LAAG), and 54–74 (GVVA…VCIA).

This sequence to M.leprae ML0030.

It is found in the cell membrane. This is an uncharacterized protein from Mycobacterium tuberculosis (strain CDC 1551 / Oshkosh).